The chain runs to 124 residues: Ribonuclease pancreatic (124 aa).

Over residues 1–13 the composition is skewed to basic and acidic residues; the sequence is KETSAQKFERQHM. The interval 1 to 25 is disordered; that stretch reads KETSAQKFERQHMDSTGSSSSSPTY. Substrate-binding residues include Lys7 and Arg10. The Proton acceptor role is filled by His12. 4 cysteine pairs are disulfide-bonded: Cys26/Cys84, Cys40/Cys95, Cys58/Cys110, and Cys65/Cys72. Substrate is bound by residues 41-45, Lys66, and Arg85; that span reads KPVNT. Catalysis depends on His119, which acts as the Proton donor.

This sequence belongs to the pancreatic ribonuclease family. Monomer. Interacts with and forms tight 1:1 complexes with RNH1. Dimerization of two such complexes may occur. Interaction with RNH1 inhibits this protein. Pancreas.

The protein resides in the secreted. The catalysed reaction is an [RNA] containing cytidine + H2O = an [RNA]-3'-cytidine-3'-phosphate + a 5'-hydroxy-ribonucleotide-3'-[RNA].. It catalyses the reaction an [RNA] containing uridine + H2O = an [RNA]-3'-uridine-3'-phosphate + a 5'-hydroxy-ribonucleotide-3'-[RNA].. Endonuclease that catalyzes the cleavage of RNA on the 3' side of pyrimidine nucleotides. Acts on single-stranded and double-stranded RNA. In Ondatra zibethicus (Muskrat), this protein is Ribonuclease pancreatic (RNASE1).